The sequence spans 1108 residues: MVTGETLVDSQKSLINNDTLLNEKLKEDFEENVSIDVKIHEELRRALPDYEESGFQRFTWHIKSWHELDRRAVSPQFAVGSRQFKITYFPQGTLQSAGFTSIFLEYIPSEEEKLSNKYGCCCQFAFVISNPRKPSLSVANSAHCRFSPEIVDWGFTQFAELKKLLCRQAPDVPPIVEDGALLLTAYVRILKDPTGVLWHSFNDYDSKIATGYVGLKNQGATCYMNSLLQSLYIIHAFRRIVYQIPTDSPQGKDSIAYALQRCFYNLQFMNEPVSTTELTKSFGWDSLDSFMQHDVQEFNRVLQDNLERSMRDTKVENALTNLFVGKMKSYIACVNVNFESARSEDYWDIQLNVKGMKNLEDSFRSYIQVETLEGDNCYFADTYGFQEAKKGVIFESFPPILHLQLKRFEYDFERDMMIKINDRYEFPLEFDAKAFLSPEADQSQNCEYVLYGVLVHSGDLHNGHYYALLKTEKDGPWYKYDDTRVTRATLREVLEENYGGDYIMHPPFRSPVKLKRFMSAYMLLYLRKDKLDELMNPVSADEIPEHLKEALNPSIQLAELRRKERLESHLYTKVQLITPEFYSEHHEFDIADFGNAYKEETIPQFRIKKEAKFSEFIPIVAEKLGYPQECMRFWYVVKRHNCTVRVESPVNELNSTMEEVKNVWNSQGEILRLYLEITPENELSSSLTHQNTGEWNAFIFVKYFDRKSQEISGCGTLHVNKSDEIRSICPLLCERANLPKNTPLNIYEEIKPGMVDFLRLEKTFTQSELSTGDIICFEPCRPSALEDDIVNSGFDSALKLYDFLSNKVLVLFRPRFIDQDSIIEFEMLLDRRIKYDDLCIELGQKLGIGADHIRLTTCNPLTYSAGMVVPNDSNITLYEILYSSEEEMPSNVIFYETMDVSLSDLDRKRLVRLRWLVDGLANIELVEAYINKSGDINDLFGAVCERFPDSDLRKKKVRVYEVFESRYHRDLSLRTLIRTINPAATLVGEVVPLDQLQLYPEEKIVQVHHFHKDIARIHGIPFSFVIKPQEKFIDTKLRLAARTQYPESIFSVIKFCVVDFDNNRVVYLNDEDITYDVVEKLNGTLALDRAKKDSKKPNILDRAIQMKN.

The region spanning 55-187 (FQRFTWHIKS…DGALLLTAYV (133 aa)) is the MATH domain. Active-site nucleophile residues include cysteine 120 and cysteine 222. The USP domain maps to 213–528 (VGLKNQGATC…SAYMLLYLRK (316 aa)). The active-site Proton acceptor is histidine 464.

It belongs to the peptidase C19 family.

The protein localises to the nucleus. It carries out the reaction Thiol-dependent hydrolysis of ester, thioester, amide, peptide and isopeptide bonds formed by the C-terminal Gly of ubiquitin (a 76-residue protein attached to proteins as an intracellular targeting signal).. Functionally, hydrolase that deubiquitinates target proteins. Cleaves the UBL propeptide in sde2. The sequence is that of Ubiquitin carboxyl-terminal hydrolase 5 (ubp5) from Schizosaccharomyces pombe (strain 972 / ATCC 24843) (Fission yeast).